Consider the following 285-residue polypeptide: Nucleotide-binding protein Pfl01_0854 (285 aa).

ATP is bound at residue 8-15 (GRSGSGKS). Residue 60–63 (DARN) participates in GTP binding.

The protein belongs to the RapZ-like family.

Functionally, displays ATPase and GTPase activities. This is Nucleotide-binding protein Pfl01_0854 from Pseudomonas fluorescens (strain Pf0-1).